The following is a 1386-amino-acid chain: Roundabout homolog 3 (1386 aa).

Residues Met1 to Ala20 form the signal peptide. Residues Gly21–Pro891 lie on the Extracellular side of the membrane. N-linked (GlcNAc...) asparagine glycans are attached at residues Asn25, Asn34, Asn41, and Asn53. Ig-like C2-type domains follow at residues Pro64–Glu160, Asp166–Met253, Pro258–Ser342, Pro347–Glu440, and Pro450–Thr531. Cys85 and Cys143 are oxidised to a cystine. Residue Asn156 is glycosylated (N-linked (GlcNAc...) asparagine). Disulfide bonds link Cys187–Cys236, Cys279–Cys326, and Cys368–Cys424. 3 N-linked (GlcNAc...) asparagine glycosylation sites follow: Asn410, Asn459, and Asn503. A disulfide bridge links Cys472 with Cys521. Disordered stretches follow at residues Asp541–Val563 and Glu639–Trp662. A compositionally biased stretch (pro residues) spans Pro546–Pro559. Fibronectin type-III domains lie at Ala558 to Ser652, Val671 to Glu766, and Pro771 to Asp869. Asn784, Asn813, and Asn820 each carry an N-linked (GlcNAc...) asparagine glycan. A helical transmembrane segment spans residues Ala892 to Leu912. At Tyr913–Arg1386 the chain is on the cytoplasmic side. 3 disordered regions span residues Ser965 to Pro989, Glu1028 to Leu1310, and Ser1327 to Arg1386. Over residues Val1067 to Glu1083 the composition is skewed to low complexity. The segment covering Gly1099–Glu1112 has biased composition (acidic residues). The span at Pro1158–Asp1169 shows a compositional bias: pro residues. Low complexity-rich tracts occupy residues Arg1178–Ser1191 and Pro1202–Gly1229. Residue Ser1263 is modified to Phosphoserine. The span at Leu1294 to Ala1304 shows a compositional bias: basic and acidic residues. A compositionally biased stretch (polar residues) spans Ser1333–Ala1344. The span at Gly1345 to Pro1361 shows a compositional bias: low complexity.

The protein belongs to the immunoglobulin superfamily. ROBO family. Monomer. Interacts (via Fibronectin type-III 1 domain) with NELL2 (via the EGF domains) with a 3:3 stoichiometry; this interaction promotes oligomerization of ROBO3 resulting in the repulsion of commissural axons in the midline.

It is found in the membrane. Its function is as follows. Receptor involved in axon guidance during development. Acts as a multifunctional regulator of pathfinding that simultaneously mediates NELL2 repulsion, inhibits SLIT repulsion, and facilitates Netrin-1/NTN1 attraction. In spinal cord development plays a role in guiding commissural axons probably by preventing premature sensitivity to Slit proteins thus inhibiting Slit signaling through ROBO1/ROBO2. Binding OF NELL2 to the receptor ROBO3 promotes oligomerization of ROBO3, resulting in the repulsion of commissural axons in the midline. ROBO3 also indirectly boosts axon attraction to NTN1 without interacting with NTN1 itself. In Homo sapiens (Human), this protein is Roundabout homolog 3.